The sequence spans 423 residues: Core protease OPG082 (423 aa).

Active-site residues include H241, D248, and C328.

This sequence belongs to the peptidase C57 family.

It is found in the virion. Late protein responsible for processing most or all of the viral core and membrane proteins known to undergo morphogenesis-associated proteolysis. These proteolytic events are involved in the transformation of immature virions (IV) into mature virions (MV). Probably cleaves at least the OPG129, OPG136, OPG098, and OPG144 precursors preferentially at Ala-Gly-|-Ala motifs. Also seems to process Ala-Gly-|-Ser and Ala-Gly-|-Thr motifs. In Homo sapiens (Human), this protein is Core protease OPG082 (OPG083).